An 890-amino-acid chain; its full sequence is DNA mismatch repair protein MutS (890 aa).

645–652 (GPNMAGKS) is an ATP binding site.

This sequence belongs to the DNA mismatch repair MutS family.

Its function is as follows. This protein is involved in the repair of mismatches in DNA. It is possible that it carries out the mismatch recognition step. This protein has a weak ATPase activity. The chain is DNA mismatch repair protein MutS from Rickettsia africae (strain ESF-5).